The following is a 351-amino-acid chain: Ribosomal RNA large subunit methyltransferase M (351 aa).

S-adenosyl-L-methionine-binding positions include Ser186, 219-222, Asp238, Asp258, and Asp274; that span reads APGG. Lys303 functions as the Proton acceptor in the catalytic mechanism.

Belongs to the class I-like SAM-binding methyltransferase superfamily. RNA methyltransferase RlmE family. RlmM subfamily. As to quaternary structure, monomer.

The protein localises to the cytoplasm. It catalyses the reaction cytidine(2498) in 23S rRNA + S-adenosyl-L-methionine = 2'-O-methylcytidine(2498) in 23S rRNA + S-adenosyl-L-homocysteine + H(+). Its function is as follows. Catalyzes the 2'-O-methylation at nucleotide C2498 in 23S rRNA. This Xylella fastidiosa (strain M12) protein is Ribosomal RNA large subunit methyltransferase M.